The sequence spans 333 residues: tRNA dimethylallyltransferase (333 aa).

23-30 (GPTGAGKT) is an ATP binding site. 25–30 (TGAGKT) lines the substrate pocket. Interaction with substrate tRNA stretches follow at residues 53–56 (DSAL) and 177–181 (QRVQR).

This sequence belongs to the IPP transferase family. Monomer. Mg(2+) serves as cofactor.

It carries out the reaction adenosine(37) in tRNA + dimethylallyl diphosphate = N(6)-dimethylallyladenosine(37) in tRNA + diphosphate. Catalyzes the transfer of a dimethylallyl group onto the adenine at position 37 in tRNAs that read codons beginning with uridine, leading to the formation of N6-(dimethylallyl)adenosine (i(6)A). This is tRNA dimethylallyltransferase from Polynucleobacter asymbioticus (strain DSM 18221 / CIP 109841 / QLW-P1DMWA-1) (Polynucleobacter necessarius subsp. asymbioticus).